The following is a 319-amino-acid chain: D-galacturonate reductase (319 aa).

The active-site Proton donor is the tyrosine 58. Position 121 (histidine 121) interacts with substrate. NADP(+) is bound at residue 216 to 275; it reads SPLGAARTKWGDDRVLGSDIIEEIAQAKGKSTAQISLRWVYEQGVSIVTKSYNKERMRQN.

This sequence belongs to the aldo/keto reductase family. In terms of tissue distribution, expressed specifically in the receptacle tissue of the fruit.

It carries out the reaction L-galactonate + NADP(+) = aldehydo-D-galacturonate + NADPH + H(+). It functions in the pathway cofactor biosynthesis; L-ascorbate biosynthesis. In terms of biological role, involved in ascorbic acid (vitamin C) biosynthesis. The sequence is that of D-galacturonate reductase (GALUR) from Fragaria ananassa (Strawberry).